The sequence spans 331 residues: DNA-directed RNA polymerase subunit alpha (331 aa).

The segment at 1–226 is alpha N-terminal domain (alpha-NTD); sequence MLIAQRPTLT…ELFGLARELN (226 aa). Positions 243 to 331 are alpha C-terminal domain (alpha-CTD); it reads LSSELSMPIE…SYDEDETTTN (89 aa).

The protein belongs to the RNA polymerase alpha chain family. As to quaternary structure, homodimer. The RNAP catalytic core consists of 2 alpha, 1 beta, 1 beta' and 1 omega subunit. When a sigma factor is associated with the core the holoenzyme is formed, which can initiate transcription.

It catalyses the reaction RNA(n) + a ribonucleoside 5'-triphosphate = RNA(n+1) + diphosphate. In terms of biological role, DNA-dependent RNA polymerase catalyzes the transcription of DNA into RNA using the four ribonucleoside triphosphates as substrates. The sequence is that of DNA-directed RNA polymerase subunit alpha from Clavibacter sepedonicus (Clavibacter michiganensis subsp. sepedonicus).